The chain runs to 459 residues: Probable PTS system sucrose-specific EIIBC component (459 aa).

The PTS EIIB type-1 domain occupies M1–E86. C25 (phosphocysteine intermediate; for EIIB activity) is an active-site residue. The region spanning K106 to E459 is the PTS EIIC type-1 domain. The next 11 membrane-spanning stretches (helical) occupy residues I111–M131, M147–A167, L177–G197, L209–V229, L245–V265, A288–L308, F329–F349, I360–V380, F388–V408, Y412–V432, and Y434–F454.

The protein resides in the cell membrane. Functionally, the phosphoenolpyruvate-dependent sugar phosphotransferase system (sugar PTS), a major carbohydrate active -transport system, catalyzes the phosphorylation of incoming sugar substrates concomitantly with their translocation across the cell membrane. This system may be involved in sucrose transport. The EIIB domain is mainly phosphorylated by the EIIA domains of GamP and PtsA/YpqE. In terms of biological role, negatively regulates SacY activity by catalyzing its phosphorylation on 'His-99'. The protein is Probable PTS system sucrose-specific EIIBC component (sacX) of Bacillus subtilis (strain 168).